Consider the following 547-residue polypeptide: MADADVIVVGAGLAGLVAACELVERGHSVIIVDQENAANIGGQAFWSFGGLFFVNSPEQRRLGIRDSQELALQDWLGTAGFDRPEDHWPREWAHAYVDFAAGEKRSWLRARGLQTFPLVGWAERGGYDALGHGNSVPRFHITWGTGPALVEIFARRIRDSVRVRFAHRHRVDELIVNAGLVAGVRGSILEPSNAPRGVASSRKVVGDFEFRASAVIVASGGIGGNLELVRKNWPARLGRVPDQLISGVPAHVDGRMIGIAESAGAHVINNDRMWHYTEGITNYDPVWPNHGIRILPGPSSLWLDANGDRLPVPLYPGYDTLGTLEHICRSGQDYTWFILNARIIAKEFALSGQEQNPDLTSRNVRDLLSRVKPGAPAPVQAFVDHGVDFVSATSLRDLVAGMNDLPDVVPLDYAKVAAEVTARDREVANRFTKDGQITAIRAARNYLGDRFTRVVAPHRLTDPKAGPLIAVKLHILTRKTLGGLETDLDSRVLKEDGTTFGGLYAAGEAAGFGGGGVHGYRSLEGTFLGGCIFSGRAAGRGAAADIA.

5–36 serves as a coordination point for FAD; it reads DVIVVGAGLAGLVAACELVERGHSVIIVDQEN.

It belongs to the FAD-dependent oxidoreductase 2 family. FAD serves as cofactor.

Its pathway is lipid metabolism; steroid biosynthesis. Its function is as follows. Able to catalyze the elimination of the C-1 and C-2 hydrogen atoms of the A-ring from the polycyclic ring structure of 3-ketosteroids, but the ketosteroid dehydrogenase activity is low compared to KsdD in the cholesterol degradation process. The low activity could be due to different substrate specificity. This is KsdD-like steroid dehydrogenase MSMEG_5835 from Mycolicibacterium smegmatis (strain ATCC 700084 / mc(2)155) (Mycobacterium smegmatis).